Here is a 699-residue protein sequence, read N- to C-terminus: Epithelial sodium channel subunit alpha (699 aa).

The disordered stretch occupies residues 1–71 (MLDHTRAPEL…EPRQPTEEEE (71 aa)). The Cytoplasmic segment spans residues 1–110 (MLDHTRAPEL…CSKHNRMKTA (110 aa)). The helical transmembrane segment at 111–131 (FWAVLWLCTFGMMYWQFALLF) threads the bilayer. Over 132-589 (EEYFSYPVSL…SQWSLWFGSS (458 aa)) the chain is Extracellular. Cystine bridges form between Cys158–Cys332, Cys256–Cys263, Cys309–Cys316, Cys421–Cys506, Cys443–Cys483, Cys443–Cys502, Cys447–Cys498, Cys456–Cys483, Cys456–Cys506, and Cys458–Cys472. The gating release of inhibition by proteolysis (GRIP); protease-sensitive region that is responsible for the proteolytic activation of the channel stretch occupies residues 200-270 (RRRSTRDLRG…SDCFYQTYSS (71 aa)). Positions 211-244 (LPHPLQRLRTPPPPNPARSARSASSSVRDNNPQV) are disordered. Over residues 227–238 (ARSARSASSSVR) the composition is skewed to low complexity. A helical transmembrane segment spans residues 590–610 (VLSVVEMAELIFDLLVITLIM). At 611-699 (LLHRFRSRYW…SSACAPAMAL (89 aa)) the chain is on the cytoplasmic side. Residues 637–699 (ASSFPSRFCP…SSACAPAMAL (63 aa)) form a disordered region. Residues 656-667 (PQQGTTPPLALT) are compositionally biased toward low complexity. Residues 669-673 (PPPAY) carry the PY motif; recruits WW domain-containing proteins and is thereby required for ubiquitination and inhibition of the channel by NEDD4 and NEDD4L motif.

It belongs to the amiloride-sensitive sodium channel (TC 1.A.6) family. SCNN1A subfamily. In terms of assembly, heterotrimer; containing an alpha/SCNN1A, a beta/SCNN1B and a gamma/SCNN1G subunit. Interacts with WWP1 (via WW domains). Interacts with WWP2 (via WW domains); inhibits the channel. Interacts with BPIFA1; the interaction is indirect via SCNN1B and inhibits the proteolytic processing of SCNN1A and SCNN1G and the activation of ENaC. Interacts with the full-length immature form of PCSK9 (pro-PCSK9). Post-translationally, ubiquitinated. Can be ubiquitinated at multiple sites and undergo monoubiquitination and polyubiquitination. Ubiquitination by NEDD4 or NEDD4L inhibits the ENaC channel through endocytosis, intracellular retention and degradation of its individual subunits. ENaC is activated through the proteolytic maturation of its subunits. Furin cleaves the SCNN1A subunit, which results in a stepwise increase in the open probability of the channel due to the release of an inhibitory tract. BPIFA1, which is recruited by the SCNN1B subunit, prevents the proteolytic activation of ENaC. In terms of processing, N-glycosylated. Expressed in kidney (at protein level). Expressed in lung (at protein level). Expressed in the epididymis (at protein level). In the caput and corpus regions of the epididymis, expressed uniformly on the luminal and basal surfaces of the ducts and in the sperm in the duct lumen. Also expressed in distal colon and, at low levels, in liver.

It localises to the apical cell membrane. Its subcellular location is the cell projection. It is found in the cilium. The protein localises to the cytoplasmic granule. The protein resides in the cytoplasm. It localises to the cytoplasmic vesicle. Its subcellular location is the secretory vesicle. It is found in the acrosome. The protein localises to the flagellum. The catalysed reaction is Na(+)(in) = Na(+)(out). Originally identified and characterized by its inhibition by the diuretic drug amiloride. Functionally, this is one of the three pore-forming subunits of the heterotrimeric epithelial sodium channel (ENaC), a critical regulator of sodium balance and fluid homeostasis. ENaC operates in epithelial tissues, where it mediates the electrodiffusion of sodium ions from extracellular fluid through the apical membrane of cells, with water following osmotically. It plays a key role in maintaining sodium homeostasis through electrogenic sodium reabsorption in the kidneys. Additionally, ENaC is essential for airway surface liquid homeostasis, which is crucial for proper mucus clearance. This is Epithelial sodium channel subunit alpha from Mus musculus (Mouse).